A 333-amino-acid chain; its full sequence is Receptor polysaccharide phosphotransferase WefC (333 aa).

Belongs to the stealth family.

In terms of biological role, part of the type 2Gn receptor polysaccharide (RPS) biosynthesis locus. Essential for cell surface RPS production, and for synthesis of the host-like GalNAc beta 1-3Gal (Gn) motif of the RPS. Probably encodes a 1-3Gal alpha transferase. The sequence is that of Receptor polysaccharide phosphotransferase WefC (wefC) from Streptococcus gordonii.